A 513-amino-acid polypeptide reads, in one-letter code: Bifunctional purine biosynthesis protein PurH (513 aa).

Residues 1–145 (MNKRAIISVY…KNFKYTTVIV (145 aa)) enclose the MGS-like domain.

It belongs to the PurH family.

The enzyme catalyses (6R)-10-formyltetrahydrofolate + 5-amino-1-(5-phospho-beta-D-ribosyl)imidazole-4-carboxamide = 5-formamido-1-(5-phospho-D-ribosyl)imidazole-4-carboxamide + (6S)-5,6,7,8-tetrahydrofolate. The catalysed reaction is IMP + H2O = 5-formamido-1-(5-phospho-D-ribosyl)imidazole-4-carboxamide. It functions in the pathway purine metabolism; IMP biosynthesis via de novo pathway; 5-formamido-1-(5-phospho-D-ribosyl)imidazole-4-carboxamide from 5-amino-1-(5-phospho-D-ribosyl)imidazole-4-carboxamide (10-formyl THF route): step 1/1. The protein operates within purine metabolism; IMP biosynthesis via de novo pathway; IMP from 5-formamido-1-(5-phospho-D-ribosyl)imidazole-4-carboxamide: step 1/1. The chain is Bifunctional purine biosynthesis protein PurH from Caldicellulosiruptor bescii (strain ATCC BAA-1888 / DSM 6725 / KCTC 15123 / Z-1320) (Anaerocellum thermophilum).